The chain runs to 212 residues: Peptide methionine sulfoxide reductase MsrA (212 aa).

Cysteine 52 is an active-site residue.

This sequence belongs to the MsrA Met sulfoxide reductase family.

The catalysed reaction is L-methionyl-[protein] + [thioredoxin]-disulfide + H2O = L-methionyl-(S)-S-oxide-[protein] + [thioredoxin]-dithiol. The enzyme catalyses [thioredoxin]-disulfide + L-methionine + H2O = L-methionine (S)-S-oxide + [thioredoxin]-dithiol. Has an important function as a repair enzyme for proteins that have been inactivated by oxidation. Catalyzes the reversible oxidation-reduction of methionine sulfoxide in proteins to methionine. The polypeptide is Peptide methionine sulfoxide reductase MsrA (Salmonella newport (strain SL254)).